The primary structure comprises 857 residues: Inactive rhomboid protein 1 (857 aa).

Topologically, residues 1–413 (MAELRRDSTS…HRPFFTYWIT (413 aa)) are cytoplasmic. The tract at residues 283–307 (FESPSDSTMKDVDSKQLDESELTGS) is disordered. Residues 290–300 (TMKDVDSKQLD) are compositionally biased toward basic and acidic residues. Residues 414-434 (FVHILITILAVCIYGIAPVGF) form a helical membrane-spanning segment. Over 435–661 (SQHETVDSVL…PDQFYRLWLS (227 aa)) the chain is Lumenal. N585 carries an N-linked (GlcNAc...) asparagine glycan. A helical transmembrane segment spans residues 662 to 682 (LFLHAGILHCLVSVCFQMTIL). At 683 to 693 (RDLEKLAGWLR) the chain is on the cytoplasmic side. The chain crosses the membrane as a helical span at residues 694-714 (ISIIYILSGITGNLASAIFLP). At 715–716 (YR) the chain is on the lumenal side. A helical transmembrane segment spans residues 717 to 737 (AEVGPAGSQFGILACLFVELI). Over 738–748 (QSWQILAQPWR) the chain is Cytoplasmic. The chain crosses the membrane as a helical span at residues 749 to 769 (AFTKLLCVVLFLFAFGLLPWI). The Lumenal segment spans residues 770-774 (DNFAH). The chain crosses the membrane as a helical span at residues 775-795 (ISGFISGFFLSFAFLPYISFG). Topologically, residues 796 to 805 (RLDMYRKRCQ) are cytoplasmic. Residues 806–826 (IIIFLVVFLGLFAGLVVLFYV) form a helical membrane-spanning segment. The Lumenal portion of the chain corresponds to 827–857 (HPIKCEWCELLTCIPFTDKFCEKYDLNAHLH).

Belongs to the peptidase S54 family.

The protein localises to the endoplasmic reticulum membrane. It is found in the golgi apparatus membrane. Functionally, regulates ADAM17 protease, a sheddase of the epidermal growth factor (EGF) receptor ligands and TNF, thereby plays a role in sleep, cell survival, proliferation, migration and inflammation. Does not exhibit any protease activity on its own. The polypeptide is Inactive rhomboid protein 1 (rhbdf1) (Danio rerio (Zebrafish)).